Here is a 316-residue protein sequence, read N- to C-terminus: 4-amino-5-hydroxymethyl-2-methylpyrimidine phosphate synthase (316 aa).

Lysine 66 is modified (N6-(pyridoxal phosphate)lysine). Histidine 70 is a catalytic residue. 118 to 121 (GEFG) lines the pyridoxal 5'-phosphate pocket. The short motif at 191–195 (CCCFC) is the CCCFC; essential for catalytic activity, may be the site of iron coordination element.

This sequence belongs to the NMT1/THI5 family. In terms of assembly, homodimer. Fe cation is required as a cofactor.

The enzyme catalyses N(6)-(pyridoxal phosphate)-L-lysyl-[4-amino-5-hydroxymethyl-2-methylpyrimidine phosphate synthase] + L-histidyl-[4-amino-5-hydroxymethyl-2-methylpyrimidine phosphate synthase] + 2 Fe(3+) + 4 H2O = L-lysyl-[4-amino-5-hydroxymethyl-2-methylpyrimidine phosphate synthase] + (2S)-2-amino-5-hydroxy-4-oxopentanoyl-[4-amino-5-hydroxymethyl-2-methylpyrimidine phosphate synthase] + 4-amino-2-methyl-5-(phosphooxymethyl)pyrimidine + 3-oxopropanoate + 2 Fe(2+) + 2 H(+). The protein operates within cofactor biosynthesis; thiamine diphosphate biosynthesis. Functionally, responsible for the formation of the pyrimidine heterocycle in the thiamine biosynthesis pathway. Catalyzes the formation of hydroxymethylpyrimidine phosphate (HMP-P) from histidine and pyridoxal phosphate (PLP). The protein uses PLP and the active site histidine to form HMP-P, generating an inactive enzyme. The enzyme can only undergo a single turnover, which suggests it is a suicide enzyme. In Legionella pneumophila subsp. pneumophila (strain Philadelphia 1 / ATCC 33152 / DSM 7513), this protein is 4-amino-5-hydroxymethyl-2-methylpyrimidine phosphate synthase.